Here is a 30-residue protein sequence, read N- to C-terminus: Snaclec coagulation factor IX/factor X-binding protein subunit B (30 aa).

Cysteine 2 and cysteine 13 are joined by a disulfide. The C-type lectin domain occupies 9-30 (YEGHCYRVFTEPQNWADAEKFC).

This sequence belongs to the snaclec family. As to quaternary structure, heterodimer of subunits A and B; disulfide-linked. In terms of processing, glycosylated. Expressed by the venom gland.

The protein resides in the secreted. Functionally, anticoagulant protein which binds to the gamma-carboxyglutamic acid-domain regions of factors IX (F9) and factor X (F10) in the presence of calcium with a 1 to 1 stoichiometry. The sequence is that of Snaclec coagulation factor IX/factor X-binding protein subunit B from Bothrops jararaca (Jararaca).